A 275-amino-acid polypeptide reads, in one-letter code: Rhamnulose-1-phosphate aldolase (275 aa).

Glu117 is a catalytic residue. Positions 141, 143, and 212 each coordinate Zn(2+).

Belongs to the aldolase class II family. RhaD subfamily. In terms of assembly, homotetramer. It depends on Zn(2+) as a cofactor.

The protein resides in the cytoplasm. It carries out the reaction L-rhamnulose 1-phosphate = (S)-lactaldehyde + dihydroxyacetone phosphate. It functions in the pathway carbohydrate degradation; L-rhamnose degradation; glycerone phosphate from L-rhamnose: step 3/3. Its function is as follows. Catalyzes the reversible cleavage of L-rhamnulose-1-phosphate to dihydroxyacetone phosphate (DHAP) and L-lactaldehyde. The protein is Rhamnulose-1-phosphate aldolase of Citrobacter koseri (strain ATCC BAA-895 / CDC 4225-83 / SGSC4696).